A 68-amino-acid chain; its full sequence is ATP synthase F(0) complex subunit 8 (68 aa).

The helical transmembrane segment at 8 to 24 (TWFTTILSMFLTLFIIF) threads the bilayer. Lys54 carries the post-translational modification N6-acetyllysine; alternate. Lys54 carries the post-translational modification N6-succinyllysine; alternate. N6-acetyllysine is present on Lys57.

Belongs to the ATPase protein 8 family. Component of the ATP synthase complex composed at least of ATP5F1A/subunit alpha, ATP5F1B/subunit beta, ATP5MC1/subunit c (homooctomer), MT-ATP6/subunit a, MT-ATP8/subunit 8, ATP5ME/subunit e, ATP5MF/subunit f, ATP5MG/subunit g, ATP5MK/subunit k, ATP5MJ/subunit j, ATP5F1C/subunit gamma, ATP5F1D/subunit delta, ATP5F1E/subunit epsilon, ATP5PF/subunit F6, ATP5PB/subunit b, ATP5PD/subunit d, ATP5PO/subunit OSCP. ATP synthase complex consists of a soluble F(1) head domain (subunits alpha(3) and beta(3)) - the catalytic core - and a membrane F(0) domain - the membrane proton channel (subunits c, a, 8, e, f, g, k and j). These two domains are linked by a central stalk (subunits gamma, delta, and epsilon) rotating inside the F1 region and a stationary peripheral stalk (subunits F6, b, d, and OSCP). Interacts with PRICKLE3.

The protein resides in the mitochondrion membrane. Subunit 8, of the mitochondrial membrane ATP synthase complex (F(1)F(0) ATP synthase or Complex V) that produces ATP from ADP in the presence of a proton gradient across the membrane which is generated by electron transport complexes of the respiratory chain. ATP synthase complex consist of a soluble F(1) head domain - the catalytic core - and a membrane F(1) domain - the membrane proton channel. These two domains are linked by a central stalk rotating inside the F(1) region and a stationary peripheral stalk. During catalysis, ATP synthesis in the catalytic domain of F(1) is coupled via a rotary mechanism of the central stalk subunits to proton translocation. In vivo, can only synthesize ATP although its ATP hydrolase activity can be activated artificially in vitro. Part of the complex F(0) domain. This is ATP synthase F(0) complex subunit 8 from Hippopotamus amphibius (Hippopotamus).